Reading from the N-terminus, the 141-residue chain is uncharacterized protein (141 aa).

Residues 13–35 (PVIGVILMVAITVILAAVIASFV) form a helical membrane-spanning segment.

It is found in the membrane. This is an uncharacterized protein from Archaeoglobus fulgidus (strain ATCC 49558 / DSM 4304 / JCM 9628 / NBRC 100126 / VC-16).